Consider the following 361-residue polypeptide: Chorismate synthase (361 aa).

Residues 37-59 (TEADLQHDLDRRRPGTSRYTTQR) are disordered. Residues 40–49 (DLQHDLDRRR) are compositionally biased toward basic and acidic residues. NADP(+) is bound by residues arginine 48 and arginine 54. FMN is bound by residues 125 to 127 (RSS), 238 to 239 (NA), glycine 278, 293 to 297 (KPTSS), and arginine 319.

This sequence belongs to the chorismate synthase family. As to quaternary structure, homotetramer. It depends on FMNH2 as a cofactor.

The catalysed reaction is 5-O-(1-carboxyvinyl)-3-phosphoshikimate = chorismate + phosphate. It functions in the pathway metabolic intermediate biosynthesis; chorismate biosynthesis; chorismate from D-erythrose 4-phosphate and phosphoenolpyruvate: step 7/7. In terms of biological role, catalyzes the anti-1,4-elimination of the C-3 phosphate and the C-6 proR hydrogen from 5-enolpyruvylshikimate-3-phosphate (EPSP) to yield chorismate, which is the branch point compound that serves as the starting substrate for the three terminal pathways of aromatic amino acid biosynthesis. This reaction introduces a second double bond into the aromatic ring system. The protein is Chorismate synthase of Serratia proteamaculans (strain 568).